The sequence spans 191 residues: uncharacterized protein (191 aa).

Helical transmembrane passes span 12–32 (FAFL…FFTL), 48–68 (LVAL…LTLF), 92–112 (YISV…LLSL), and 168–188 (IFCL…SCAF).

The protein resides in the membrane. This is an uncharacterized protein from Saccharomyces cerevisiae (strain ATCC 204508 / S288c) (Baker's yeast).